Reading from the N-terminus, the 77-residue chain is MARITVEDCQKRIDNRFLLVQMAIKRVQQYREGYEPLVDSKNKEVVTALREIAAGKVMPEDLALYRPAEGEEMPVAE.

Belongs to the RNA polymerase subunit omega family. In terms of assembly, the RNAP catalytic core consists of 2 alpha, 1 beta, 1 beta' and 1 omega subunit. When a sigma factor is associated with the core the holoenzyme is formed, which can initiate transcription.

It catalyses the reaction RNA(n) + a ribonucleoside 5'-triphosphate = RNA(n+1) + diphosphate. Functionally, promotes RNA polymerase assembly. Latches the N- and C-terminal regions of the beta' subunit thereby facilitating its interaction with the beta and alpha subunits. This is DNA-directed RNA polymerase subunit omega from Nitratidesulfovibrio vulgaris (strain ATCC 29579 / DSM 644 / CCUG 34227 / NCIMB 8303 / VKM B-1760 / Hildenborough) (Desulfovibrio vulgaris).